The primary structure comprises 387 residues: Ferrochelatase (387 aa).

His196 and Glu277 together coordinate Fe cation.

This sequence belongs to the ferrochelatase family.

Its subcellular location is the cytoplasm. It catalyses the reaction heme b + 2 H(+) = protoporphyrin IX + Fe(2+). It functions in the pathway porphyrin-containing compound metabolism; protoheme biosynthesis; protoheme from protoporphyrin-IX: step 1/1. In terms of biological role, catalyzes the ferrous insertion into protoporphyrin IX. This Trichodesmium erythraeum (strain IMS101) protein is Ferrochelatase.